The chain runs to 550 residues: (S)-beta-bisabolene synthase (550 aa).

Residues Asp303, Asp307, Ser451, and Glu455 each coordinate Mg(2+). The short motif at 303–307 (DDTYD) is the DDXXD motif element.

Belongs to the terpene synthase family. Tpsa subfamily. Mg(2+) serves as cofactor. Mn(2+) is required as a cofactor. Expressed only in young rhizomes. Not detected in leaves, roots and mature rhizomes.

The enzyme catalyses (2E,6E)-farnesyl diphosphate = (S)-beta-bisabolene + diphosphate. Functionally, sesquiterpene synthase involved in the biosynthesis of bisabolene. This is (S)-beta-bisabolene synthase (TPS1) from Zingiber officinale (Ginger).